The chain runs to 1136 residues: Probable phospholipid-transporting ATPase IIB (1136 aa).

Residues 1-145 (MADQIPLYPV…IKNQKYNIFT (145 aa)) lie on the Cytoplasmic side of the membrane. Residues 146–166 (FIPGVLYEQFKFFLNLYFLIV) form a helical membrane-spanning segment. Residues 167–174 (SCSQFVPA) lie on the Extracellular side of the membrane. The helical transmembrane segment at 175–195 (LKIGYLYTYWAPLGFVLAVTI) threads the bilayer. Over 196–383 (MREAVDEFRR…LDLELNQLTK (188 aa)) the chain is Cytoplasmic. Residues 384–404 (ALFLALVALSVVMVTLQGFAG) traverse the membrane as a helical segment. Over 405–408 (PWYR) the chain is Extracellular. A helical transmembrane segment spans residues 409-429 (SLFRFLLLFSYIIPISLRVNL). Topologically, residues 430–939 (DMGKAAYGWM…ALGQFVMHRG (510 aa)) are cytoplasmic. D469 functions as the 4-aspartylphosphate intermediate in the catalytic mechanism. The ATP site is built by D469, K470, and T471. Residue D469 participates in Mg(2+) binding. Position 471 (T471) interacts with Mg(2+). Positions 514 to 538 (AGGSSAASTPPRKAPSSAPKVRRSV) are disordered. E591, F633, K638, K657, R686, T687, T766, G767, D768, R848, and K854 together coordinate ATP. Mg(2+) is bound at residue D874. ATP contacts are provided by N877 and D878. Residue D878 participates in Mg(2+) binding. The helical transmembrane segment at 940–960 (LIISTMQAVFSSVFYFASVPL) threads the bilayer. The Extracellular segment spans residues 961–962 (YQ). The chain crosses the membrane as a helical span at residues 963–983 (GFLMVGYATVYTMFPVFSLVL). Residues 984–1012 (DQDVKPEMAMLYPELYKDLTKGRSLSFKT) lie on the Cytoplasmic side of the membrane. Residues 1013 to 1033 (FLVWVLISIYQGGILMFGALV) form a helical membrane-spanning segment. Topologically, residues 1034 to 1041 (LFESEFVH) are extracellular. The chain crosses the membrane as a helical span at residues 1042–1062 (VVAISFTALVLTELLMVALTV). Over 1063–1066 (RTWH) the chain is Cytoplasmic. A helical transmembrane segment spans residues 1067 to 1087 (WLMVVAQLLSLGCYVASLAFL). Over 1088–1098 (NEYFDVAFITT) the chain is Extracellular. Residues 1099-1119 (VTFVWKVSAITVVSCLPLYVL) form a helical membrane-spanning segment. Residues 1120–1136 (KYLKRKLSPPSYSKLSS) lie on the Cytoplasmic side of the membrane.

This sequence belongs to the cation transport ATPase (P-type) (TC 3.A.3) family. Type IV subfamily. Requires Mg(2+) as cofactor.

The protein localises to the golgi apparatus. The protein resides in the trans-Golgi network membrane. The catalysed reaction is ATP + H2O + phospholipidSide 1 = ADP + phosphate + phospholipidSide 2.. This chain is Probable phospholipid-transporting ATPase IIB (ATP9B), found in Bos taurus (Bovine).